Reading from the N-terminus, the 559-residue chain is Asparagine--tRNA ligase, cytoplasmic (559 aa).

Phosphoserine is present on Ser72. Residues Lys255 and Lys501 each carry the N6-acetyllysine modification.

The protein belongs to the class-II aminoacyl-tRNA synthetase family.

Its subcellular location is the cytoplasm. It catalyses the reaction tRNA(Asn) + L-asparagine + ATP = L-asparaginyl-tRNA(Asn) + AMP + diphosphate + H(+). This chain is Asparagine--tRNA ligase, cytoplasmic (NARS), found in Bos taurus (Bovine).